Here is a 233-residue protein sequence, read N- to C-terminus: UPF0758 protein SRU_2338 (233 aa).

One can recognise an MPN domain in the interval 110–232 (QVTCPADVAD…HTSLAERGVI (123 aa)). The Zn(2+) site is built by histidine 181, histidine 183, and aspartate 194. Residues 181–194 (HNHPSGNPEPSRED) carry the JAMM motif motif.

This sequence belongs to the UPF0758 family.

This is UPF0758 protein SRU_2338 from Salinibacter ruber (strain DSM 13855 / M31).